We begin with the raw amino-acid sequence, 283 residues long: Polyamine aminopropyltransferase (283 aa).

Residues 3 to 236 (GIWFSELQTP…GLWAFSLGSK (234 aa)) enclose the PABS domain. S-methyl-5'-thioadenosine is bound at residue Gln-32. Residues His-63 and Asp-87 each coordinate spermidine. Residues Glu-107 and 138 to 139 (DG) contribute to the S-methyl-5'-thioadenosine site. Residue Asp-156 is the Proton acceptor of the active site. 156 to 159 (DSTD) contacts spermidine. An S-methyl-5'-thioadenosine-binding site is contributed by Pro-163.

Belongs to the spermidine/spermine synthase family. As to quaternary structure, homodimer or homotetramer.

The protein localises to the cytoplasm. It carries out the reaction S-adenosyl 3-(methylsulfanyl)propylamine + putrescine = S-methyl-5'-thioadenosine + spermidine + H(+). The protein operates within amine and polyamine biosynthesis; spermidine biosynthesis; spermidine from putrescine: step 1/1. In terms of biological role, catalyzes the irreversible transfer of a propylamine group from the amino donor S-adenosylmethioninamine (decarboxy-AdoMet) to putrescine (1,4-diaminobutane) to yield spermidine. In Moorella thermoacetica (strain ATCC 39073 / JCM 9320), this protein is Polyamine aminopropyltransferase.